A 1002-amino-acid chain; its full sequence is Solute carrier family 12 member 3 (1002 aa).

Residues 1-135 (MAELPVTELP…KSPGEPVRFG (135 aa)) lie on the Cytoplasmic side of the membrane. Phosphoserine is present on Ser41. Thr44 carries the phosphothreonine modification. Ser47 is modified (phosphoserine). Residues Thr48, Thr53, and Thr58 each carry the phosphothreonine modification. A phosphoserine mark is found at Ser71 and Ser89. Phosphothreonine is present on Thr122. A Phosphoserine modification is found at Ser124. Residues 136 to 165 (WVKGVMIRCMLNIWGVILYLRLPWITAQAG) traverse the membrane as a discontinuously helical segment. The Na(+) site is built by Leu146 and Trp149. The helical transmembrane segment at 166–187 (IVLTWLIILLSVMVTSITGLSI) threads the bilayer. Topologically, residues 188-218 (SAISTNGKVKSGGTYFLISRSLGPELGGSIG) are cytoplasmic. The chain crosses the membrane as a helical span at residues 219–241 (LIFAFANAVGVAMHTVGFAETVR). Topologically, residues 242 to 253 (DLLQEYGTPIVD) are extracellular. 2 consecutive transmembrane segments (helical) span residues 254–278 (PIND…AGME) and 279–301 (WESK…YLVG). Residues 302 to 336 (TLIPASEDKASKGFYSYHGDIFVQNLVPDWRGIDG) lie on the Extracellular side of the membrane. The chain crosses the membrane as a discontinuously helical span at residues 337–358 (SFFGMFSIFFPSATGILAGANI). Chloride contacts are provided by Gly351, Ile352, and Leu353. At 359-369 (SGDLKDPAVAI) the chain is on the cytoplasmic side. Residues 370 to 391 (PKGTLMAIFWTTISYLAISATI) form a helical membrane-spanning segment. Residues 392–451 (GSCVVRDASGDVNDTMTPGPGPCEGLACGYGWNFTECSQQRSCRYGLINYYQTMSMVSAF) are Extracellular-facing. The N-linked (GlcNAc...) asparagine glycan is linked to Asn404. A disulfide bridge links Cys414 with Cys419. Asn424 is a glycosylation site (N-linked (GlcNAc...) asparagine). Cys428 and Cys434 form a disulfide bridge. Residues 452 to 475 (APLITAGIFGATLSSALACLVSAA) traverse the membrane as a helical segment. Positions 462, 465, and 466 each coordinate Na(+). Over 476–505 (KVFQCLCEDQLYPLIGFFGKGYGKNREPVR) the chain is Cytoplasmic. Residues 506 to 520 (GYLLAYAIAVAFIII) form a helical membrane-spanning segment. The Extracellular segment spans residues 521 to 525 (AELNT). A helical transmembrane segment spans residues 526–542 (IAPIISNFFLCSYALIN). Position 538 (Tyr538) interacts with chloride. Topologically, residues 543–565 (FSCFHASITNSPGWRPSFRYYSK) are cytoplasmic. Helical transmembrane passes span 566–585 (WAAL…LTWW) and 586–597 (AALIAIGVVLFL). The Cytoplasmic segment spans residues 598 to 1002 (LLYVIYKKPE…QENVLTFYCQ (405 aa)). The tract at residues 613–628 (SVQAGSYNLALSYSVG) is scissor helix. ATP is bound by residues Leu646, Arg653, Val675, Gly739, Leu778, and Asn779.

This sequence belongs to the SLC12A transporter family. In terms of assembly, homodimer; adopts a domain-swap conformation at the scissor helices connecting the transmembrane domain and C-terminal domain. Interacts with KLHL3. Interacts with IL18R1; this interaction is increased by IL18 treatment. Ubiquitinated; ubiquitination is essential for regulation of endocytosis. In terms of processing, phosphorylated at Thr-53, Thr-58 and Ser-71 by OXSR1/OSR1 and STK39/SPAK downstream of WNK4, promoting its activity. Phosphorylated in response to IL18. Expressed predominantly in kidney, including in distal tubules (at protein level). Detected at low levels in heart, lung and liver. Not detected in normal aorta, but abundantly expressed in fatty streaks and advanced atherosclerotic lesions. In atherosclerotic lesions, expressed in macrophages, smooth muscle cells and endothelial cells (at protein level).

It localises to the cell membrane. Its subcellular location is the apical cell membrane. The catalysed reaction is chloride(out) + Na(+)(out) = chloride(in) + Na(+)(in). Its activity is regulated as follows. Phosphorylation by OXSR1/OSR1 and STK39/SPAK in kidney distal convoluted tubules promotes its activity. Also activated by OXSR1/OSR1 and STK39/SPAK downstream of WNK3. Inhibited by thiazide-type diuretic metolazone. Thiazide drugs, such as polythiazide, specifically inhibit SLC12A3/NCC transporter activity by competing with chloride for binding. Its function is as follows. Electroneutral sodium and chloride ion cotransporter, which acts as a key mediator of sodium and chloride reabsorption in kidney distal convoluted tubules. Also acts as a receptor for the pro-inflammatory cytokine IL18, thereby contributing to IL18-induced cytokine production, including IFNG, IL6, IL18 and CCL2. May act either independently of IL18R1, or in a complex with IL18R1. This Mus musculus (Mouse) protein is Solute carrier family 12 member 3.